The primary structure comprises 487 residues: GTPase Der (487 aa).

2 consecutive EngA-type G domains span residues 3-166 (PVIA…PRDA) and 193-366 (IKIA…KSAV). GTP contacts are provided by residues 9–16 (GRPNVGKS), 56–60 (DTGGI), 118–121 (NKID), 199–206 (GRPNVGKS), 246–250 (DTAGV), and 311–314 (NKWD). In terms of domain architecture, KH-like spans 367 to 451 (TRWPTSRLTQ…PIRIEYKGGE (85 aa)). The segment covering 448-461 (KGGENPYEGKKNTL) has biased composition (basic and acidic residues). The disordered stretch occupies residues 448-487 (KGGENPYEGKKNTLTDRQVNKKRRLMSHHKKAEKKRRDKR). Positions 467–487 (NKKRRLMSHHKKAEKKRRDKR) are enriched in basic residues.

The protein belongs to the TRAFAC class TrmE-Era-EngA-EngB-Septin-like GTPase superfamily. EngA (Der) GTPase family. Associates with the 50S ribosomal subunit.

Functionally, GTPase that plays an essential role in the late steps of ribosome biogenesis. In Pseudomonas putida (strain W619), this protein is GTPase Der.